The chain runs to 180 residues: UPF0227 protein YcfP (180 aa).

The protein belongs to the UPF0227 family.

The polypeptide is UPF0227 protein YcfP (Escherichia coli O9:H4 (strain HS)).